The following is a 1104-amino-acid chain: SWI/SNF complex subunit SMARCC1 (1104 aa).

A marR-like, BRCT and chromo domains module region spans residues 27–301; the sequence is LAVYRRKDGG…PVSFRQRIST (275 aa). Residues 37–163 enclose the MarR-like domain; it reads PASKFWESPD…IEKTLVQNNC (127 aa). Residues 167 to 210 enclose the BRCT; N-terminus domain; that stretch reads PNIYLIPDIDLKLANKLKDIIKRHQGTFTDEKSKASHHIYPYPS. A Glycyl lysine isopeptide (Lys-Gly) (interchain with G-Cter in SUMO2) cross-link involves residue Lys178. The Chromo domain maps to 216–244; sequence EWLRPVMRRDKQVLVHWGFYPDSYDTWVH. Residues 260–284 form the BRCT; C-terminus domain; it reads KPWKVHVKWILDTDVFNEWMNEEDY. Positions 295 to 445 are disordered; the sequence is FRQRISTKNE…PGEDNVTEQT (151 aa). The span at 301 to 317 shows a compositional bias: basic and acidic residues; that stretch reads TKNEEPVRSPERRDRKA. A phosphoserine mark is found at Ser309, Ser327, and Ser329. At Thr334 the chain carries Phosphothreonine. N6-acetyllysine occurs at positions 344 and 345. Position 349 is a phosphoserine (Ser349). At Lys353 the chain carries N6-acetyllysine. Residue Ser356 is modified to Phosphoserine. Lys358 bears the N6-acetyllysine; alternate mark. A Glycyl lysine isopeptide (Lys-Gly) (interchain with G-Cter in SUMO2); alternate cross-link involves residue Lys358. The residue at position 397 (Thr397) is a Phosphothreonine. The SWIRM domain maps to 448–545; it reads IIIPSYASWF…YQVDPESRPM (98 aa). The residue at position 572 (Ser572) is a Phosphoserine. A Glycyl lysine isopeptide (Lys-Gly) (interchain with G-Cter in SUMO2) cross-link involves residue Lys591. In terms of domain architecture, SANT spans 617 to 668; the sequence is SAGREWTEQETLLLLEALEMYKDDWNKVSEHVGSRTQDECILHFLRLPIEDP. Lys738 participates in a covalent cross-link: Glycyl lysine isopeptide (Lys-Gly) (interchain with G-Cter in SUMO2). The interval 744–859 is disordered; the sequence is ARASGKVDPT…DAGKKKVEHE (116 aa). Ser775 carries the phosphoserine modification. Positions 775–784 are enriched in acidic residues; that stretch reads SEEEKMETDP. Over residues 788–859 the composition is skewed to basic and acidic residues; that stretch reads QPEKAENKVE…DAGKKKVEHE (72 aa). Lys795 is covalently cross-linked (Glycyl lysine isopeptide (Lys-Gly) (interchain with G-Cter in SUMO2)). 2 positions are modified to phosphoserine: Ser821 and Ser824. Residues Lys828 and Lys855 each participate in a glycyl lysine isopeptide (Lys-Gly) (interchain with G-Cter in SUMO2) cross-link. The stretch at 909-945 forms a coiled coil; sequence KLRHFEELETIMDREKEALEQQRQQLLTERQNFHMEQ. Lys947 bears the N6-acetyllysine mark. Disordered stretches follow at residues 955–1021 and 1041–1104; these read QQME…PGPG and IHPT…SATP. Low complexity predominate over residues 956–973; it reads QMEQQQQHGQTPQQAHQH. 2 stretches are compositionally biased toward pro residues: residues 994–1017 and 1048–1057; these read QQPP…PGQI and PTPPGMPPMP. Asymmetric dimethylarginine is present on Arg1064. The segment covering 1073-1104 has biased composition (pro residues); sequence MYPPPPQQQQPPPPADGVPPPPAPGPPASATP.

The protein belongs to the SMARCC family. In terms of assembly, component of the multiprotein chromatin-remodeling complexes SWI/SNF: SWI/SNF-A (BAF), SWI/SNF-B (PBAF) and related complexes. The canonical complex contains a catalytic subunit (either SMARCA4/BRG1/BAF190A or SMARCA2/BRM/BAF190B) and at least SMARCE1, ACTL6A/BAF53, SMARCC1/BAF155, SMARCC2/BAF170, and SMARCB1/SNF5/BAF47. Other subunits specific to each of the complexes may also be present permitting several possible combinations developmentally and tissue specific. Component of the BAF complex, which includes at least actin (ACTB), ARID1A/BAF250A, ARID1B/BAF250B, SMARCA2/BRM, SMARCA4/BRG1, ACTL6A/BAF53, ACTL6B/BAF53B, SMARCE1/BAF57, SMARCC1/BAF155, SMARCC2/BAF170, SMARCB1/SNF5/INI1, and one or more SMARCD1/BAF60A, SMARCD2/BAF60B, or SMARCD3/BAF60C. In muscle cells, the BAF complex also contains DPF3. Component of neural progenitors-specific chromatin remodeling complex (npBAF complex) composed of at least, ARID1A/BAF250A or ARID1B/BAF250B, SMARCD1/BAF60A, SMARCD3/BAF60C, SMARCA2/BRM/BAF190B, SMARCA4/BRG1/BAF190A, SMARCB1/BAF47, SMARCC1/BAF155, SMARCE1/BAF57, SMARCC2/BAF170, PHF10/BAF45A, ACTL6A/BAF53A and actin. Component of neuron-specific chromatin remodeling complex (nBAF complex) composed of at least, ARID1A/BAF250A or ARID1B/BAF250B, SMARCD1/BAF60A, SMARCD3/BAF60C, SMARCA2/BRM/BAF190B, SMARCA4/BRG1/BAF190A, SMARCB1/BAF47, SMARCC1/BAF155, SMARCE1/BAF57, SMARCC2/BAF170, DPF1/BAF45B, DPF3/BAF45C, ACTL6B/BAF53B and actin. Component of the SWI/SNF-B (PBAF) chromatin remodeling complex, at least composed of SMARCA4/BRG1, SMARCB1/BAF47/SNF5, ACTL6A/BAF53A or ACTL6B/BAF53B, SMARCE1/BAF57, SMARCD1/BAF60A, SMARCD2/BAF60B, perhaps SMARCD3/BAF60C, SMARCC1/BAF155, SMARCC2/BAF170, PBRM1/BAF180, ARID2/BAF200 and actin. Component of SWI/SNF (GBAF) subcomplex, which includes at least BICRA or BICRAL (mutually exclusive), BRD9, SS18, SMARCA2/BRM, SMARCA4/BRG1/BAF190A, ACTL6A/BAF53, SMARCC1/BAF155, and SMARCD1/BAF60A. May also interact with the SIN3A histone deacetylase transcription repressor complex in conjunction with SMARCA2 and SMARCA4. The minimal complex composed of SMARCC1 and SMARCA4 seems to be able to associate with cyclin such as CCNE1 or transcription factors such as KLF1 or GATA1. Interacts with NR3C1 and SMARD1. Interacts with TRIP12; leading to disrupt interaction between TRIP12 and SMARCE1 and prevent SMARCE1 ubiquitination. Interacts with CEBPB (when not methylated). Interacts with KDM6B. Interacts with MKKS; the interaction takes place predominantly in the cytoplasm and may modulate SMARCC1 location. Interacts with DPF2. Interacts with PRDM1/BLIMP1. Interacts with DPF3a (isoform 2 of DPF3/BAF45C) and with HDGFL2 in a DPF3a-dependent manner. As to expression, highly expressed in adult brain, testis and thymus.

Its subcellular location is the nucleus. It localises to the cytoplasm. Functionally, involved in transcriptional activation and repression of select genes by chromatin remodeling (alteration of DNA-nucleosome topology). Component of SWI/SNF chromatin remodeling complexes that carry out key enzymatic activities, changing chromatin structure by altering DNA-histone contacts within a nucleosome in an ATP-dependent manner. May stimulate the ATPase activity of the catalytic subunit of the complex. Belongs to the neural progenitors-specific chromatin remodeling complex (npBAF complex) and the neuron-specific chromatin remodeling complex (nBAF complex). During neural development a switch from a stem/progenitor to a postmitotic chromatin remodeling mechanism occurs as neurons exit the cell cycle and become committed to their adult state. The transition from proliferating neural stem/progenitor cells to postmitotic neurons requires a switch in subunit composition of the npBAF and nBAF complexes. As neural progenitors exit mitosis and differentiate into neurons, npBAF complexes which contain ACTL6A/BAF53A and PHF10/BAF45A, are exchanged for homologous alternative ACTL6B/BAF53B and DPF1/BAF45B or DPF3/BAF45C subunits in neuron-specific complexes (nBAF). The npBAF complex is essential for the self-renewal/proliferative capacity of the multipotent neural stem cells. The nBAF complex along with CREST plays a role regulating the activity of genes essential for dendrite growth. The protein is SWI/SNF complex subunit SMARCC1 (Smarcc1) of Mus musculus (Mouse).